Consider the following 311-residue polypeptide: Porphobilinogen deaminase (311 aa).

Cys241 is modified (S-(dipyrrolylmethanemethyl)cysteine).

The protein belongs to the HMBS family. Monomer. Dipyrromethane serves as cofactor.

It carries out the reaction 4 porphobilinogen + H2O = hydroxymethylbilane + 4 NH4(+). Its pathway is porphyrin-containing compound metabolism; protoporphyrin-IX biosynthesis; coproporphyrinogen-III from 5-aminolevulinate: step 2/4. In terms of biological role, tetrapolymerization of the monopyrrole PBG into the hydroxymethylbilane pre-uroporphyrinogen in several discrete steps. This Shouchella clausii (strain KSM-K16) (Alkalihalobacillus clausii) protein is Porphobilinogen deaminase.